The primary structure comprises 396 residues: Protein Njmu-R1 (396 aa).

The segment at 1-78 (MLPSLQESMD…SGDDFSLSLA (78 aa)) is disordered. Phosphoserine occurs at positions 8 and 18. Over residues 9-24 (MDGDEKELESSEEGGS) the composition is skewed to acidic residues. Residues 58–67 (GSPSGTNAET) are compositionally biased toward polar residues.

In terms of assembly, component of the complex WDR11 composed of C17orf75, FAM91A1 and WDR11; FAM91A1 and WDR11 are required for proper location of the complex. Interacts with TBC1D23; this interaction may be indirect and recruits TBC1D23 to AP-1-derived vesicles. In terms of tissue distribution, highly expressed in testis and also expressed in fetal testis.

Its subcellular location is the golgi apparatus. The protein localises to the trans-Golgi network. The protein resides in the cytoplasmic vesicle. In terms of biological role, as component of the WDR11 complex acts together with TBC1D23 to facilitate the golgin-mediated capture of vesicles generated using AP-1. May have a role in spermatogenesis. This chain is Protein Njmu-R1 (C17orf75), found in Homo sapiens (Human).